The sequence spans 222 residues: Deoxyribose-phosphate aldolase (222 aa).

The active-site Proton donor/acceptor is the aspartate 90. Lysine 152 functions as the Schiff-base intermediate with acetaldehyde in the catalytic mechanism. Lysine 181 serves as the catalytic Proton donor/acceptor.

It belongs to the DeoC/FbaB aldolase family. DeoC type 1 subfamily.

It localises to the cytoplasm. The catalysed reaction is 2-deoxy-D-ribose 5-phosphate = D-glyceraldehyde 3-phosphate + acetaldehyde. The protein operates within carbohydrate degradation; 2-deoxy-D-ribose 1-phosphate degradation; D-glyceraldehyde 3-phosphate and acetaldehyde from 2-deoxy-alpha-D-ribose 1-phosphate: step 2/2. Its function is as follows. Catalyzes a reversible aldol reaction between acetaldehyde and D-glyceraldehyde 3-phosphate to generate 2-deoxy-D-ribose 5-phosphate. The sequence is that of Deoxyribose-phosphate aldolase from Pectobacterium atrosepticum (strain SCRI 1043 / ATCC BAA-672) (Erwinia carotovora subsp. atroseptica).